We begin with the raw amino-acid sequence, 714 residues long: DNA gyrase subunit B (714 aa).

The region spanning 492-606 (SELYVVEGDS…NGHVFLAQPP (115 aa)) is the Toprim domain. Mg(2+)-binding residues include E498, D571, and D573.

This sequence belongs to the type II topoisomerase GyrB family. In terms of assembly, heterotetramer, composed of two GyrA and two GyrB chains. In the heterotetramer, GyrA contains the active site tyrosine that forms a transient covalent intermediate with DNA, while GyrB binds cofactors and catalyzes ATP hydrolysis. Mg(2+) serves as cofactor. Mn(2+) is required as a cofactor. Requires Ca(2+) as cofactor.

Its subcellular location is the cytoplasm. The catalysed reaction is ATP-dependent breakage, passage and rejoining of double-stranded DNA.. Its activity is regulated as follows. DNA supercoiling is inhibited by EDTA, novobiocin, coumermycin and ciprofloxacin. A type II topoisomerase that negatively supercoils closed circular double-stranded DNA in an ATP-dependent manner and also catalyzes the interconversion of other topological isomers of double-stranded DNA rings, including catenanes and knotted rings. Relaxes negatively supercoiled DNA in an ATP-independent manner. A linear reaction intermediate can be trapped in the presence of the antibiotic ciprofloxacin. Negative supercoiling favors strand separation, and DNA replication, transcription, recombination and repair, all of which involve strand separation. Type II topoisomerases break and join 2 DNA strands simultaneously in an ATP-dependent manner. The sequence is that of DNA gyrase subunit B from Mycobacterium bovis (strain BCG / Pasteur 1173P2).